A 267-amino-acid polypeptide reads, in one-letter code: Thiamine thiazole synthase (267 aa).

NAD(+)-binding positions include serine 41, 60 to 61 (ER), glycine 68, valine 132, and 160 to 162 (HVD). Fe cation is bound by residues aspartate 162 and histidine 177. Residue methionine 227 coordinates NAD(+). A glycine-binding site is contributed by arginine 237.

Belongs to the THI4 family. In terms of assembly, homooctamer; tetramer of dimers. It depends on Fe(2+) as a cofactor.

The enzyme catalyses hydrogen sulfide + glycine + NAD(+) = ADP-5-ethyl-4-methylthiazole-2-carboxylate + nicotinamide + 3 H2O + H(+). The protein operates within cofactor biosynthesis; thiamine diphosphate biosynthesis. Involved in the biosynthesis of the thiazole moiety of thiamine. Catalyzes the conversion of NAD and glycine to adenosine diphosphate 5-(2-hydroxyethyl)-4-methylthiazole-2-carboxylate (ADT), an adenylated thiazole intermediate, using free sulfide as a source of sulfur. The polypeptide is Thiamine thiazole synthase (Saccharolobus islandicus (strain M.14.25 / Kamchatka #1) (Sulfolobus islandicus)).